Here is a 421-residue protein sequence, read N- to C-terminus: Gamma-glutamyl phosphate reductase (421 aa).

This sequence belongs to the gamma-glutamyl phosphate reductase family.

It is found in the cytoplasm. It carries out the reaction L-glutamate 5-semialdehyde + phosphate + NADP(+) = L-glutamyl 5-phosphate + NADPH + H(+). It participates in amino-acid biosynthesis; L-proline biosynthesis; L-glutamate 5-semialdehyde from L-glutamate: step 2/2. Its function is as follows. Catalyzes the NADPH-dependent reduction of L-glutamate 5-phosphate into L-glutamate 5-semialdehyde and phosphate. The product spontaneously undergoes cyclization to form 1-pyrroline-5-carboxylate. In Erythrobacter litoralis (strain HTCC2594), this protein is Gamma-glutamyl phosphate reductase.